We begin with the raw amino-acid sequence, 327 residues long: Ribose-phosphate pyrophosphokinase (327 aa).

ATP is bound by residues 46-48 and 105-106; these read NGE and RQ. Mg(2+)-binding residues include His-139 and Asp-179. Residue Lys-203 is part of the active site. D-ribose 5-phosphate-binding positions include Arg-205, Asp-231, and 235–239; that span reads DTGGT.

This sequence belongs to the ribose-phosphate pyrophosphokinase family. Class I subfamily. Homohexamer. The cofactor is Mg(2+).

The protein localises to the cytoplasm. It catalyses the reaction D-ribose 5-phosphate + ATP = 5-phospho-alpha-D-ribose 1-diphosphate + AMP + H(+). The protein operates within metabolic intermediate biosynthesis; 5-phospho-alpha-D-ribose 1-diphosphate biosynthesis; 5-phospho-alpha-D-ribose 1-diphosphate from D-ribose 5-phosphate (route I): step 1/1. In terms of biological role, involved in the biosynthesis of the central metabolite phospho-alpha-D-ribosyl-1-pyrophosphate (PRPP) via the transfer of pyrophosphoryl group from ATP to 1-hydroxyl of ribose-5-phosphate (Rib-5-P). The polypeptide is Ribose-phosphate pyrophosphokinase (Mycobacterium leprae (strain TN)).